We begin with the raw amino-acid sequence, 237 residues long: uncharacterized protein (237 aa).

The DPCK domain occupies 13–218 (VVGLSGGVAT…KSWKPYIFRV (206 aa)). 18-25 (GGVATGKS) is a binding site for ATP.

Belongs to the CoaE family.

This is an uncharacterized protein from Caenorhabditis elegans.